We begin with the raw amino-acid sequence, 803 residues long: Mechanosensitive cation channel TMEM63A (803 aa).

Residues 1-51 (MTDSPFLELWQSRTVAIRERLGIGDQPNDSYCYNSAKNSTVLQGVTFGGIP) are Extracellular-facing. Residues 52-74 (TVLFIDVSCFLFLIVVFSIIRRK) form a helical membrane-spanning segment. The Cytoplasmic portion of the chain corresponds to 75 to 133 (FWDYGRIALVSEGNSESRFRRLSSSSSGQQDFESELGCCSWLTAIFRLHDDQILEWCGE). Residues 134 to 166 (DAIHYLSFQRHIIFLLVVVSCLSLCIILPVNLS) form a helical membrane-spanning segment. Residues 167-190 (GDLLDKDPYSFGRTTIANLQTDNN) lie on the Extracellular side of the membrane. The chain crosses the membrane as a helical span at residues 191–216 (LLWLHTIFAILYLILTVVFMRHHTQS). Topologically, residues 217–415 (IKYKEESLVR…CWKNLSIQGF (199 aa)) are cytoplasmic. The intracellular linker IL2; confers mechanosensitivity stretch occupies residues 218-413 (KYKEESLVRR…DICWKNLSIQ (196 aa)). A helical membrane pass occupies residues 416–443 (RWWFQWLGINFILFVGLFFLTTPSIILS). The Extracellular portion of the chain corresponds to 444 to 461 (TMDKFNVTKPIHALNDPI). A helical membrane pass occupies residues 462-489 (ISQFFPTLLLWSFSALLPTIVCYSTLLE). The Cytoplasmic portion of the chain corresponds to 490–494 (SHWTK). Residues 495 to 531 (SGENRIMMTKVYIFLIFMVLILPSLGLTSLDFFFRWL) form a helical membrane-spanning segment. Topologically, residues 532-553 (FDKTSSEASIRLECVFLPDQGA) are extracellular. Residues 554–585 (FFVNYVIASAFIGNGMELLRLPGLILYTFRMV) form a helical membrane-spanning segment. Residues 554–585 (FFVNYVIASAFIGNGMELLRLPGLILYTFRMV) form a gating helix region. The Cytoplasmic segment spans residues 586–605 (MAKTAADRRNVKQHQAFEYE). Residues 606 to 623 (FGAMYAWMLCVFTVIMAY) form a helical membrane-spanning segment. Topologically, residues 624-627 (SITC) are extracellular. Residues 628–650 (PIIVPFGLIYILLKHMVDRHNLY) traverse the membrane as a helical segment. The Cytoplasmic segment spans residues 651–660 (FAYLPAKLEK). Residues 661 to 688 (RIHFAAVNQALAAPILCLFWLYFFSFLR) form a helical membrane-spanning segment. At 689-693 (LGLKA) the chain is on the extracellular side. A helical transmembrane segment spans residues 694–708 (PLTLFTFLVLLLTIL). Topologically, residues 709-803 (VCLAYTCFGC…DSVAAADQED (95 aa)) are cytoplasmic.

This sequence belongs to the CSC1 (TC 1.A.17) family. In terms of assembly, (Microbial infection) Interacts with H.contortus GAL-1 (via domain galectin 1).

The protein localises to the lysosome membrane. Its subcellular location is the early endosome membrane. The protein resides in the cell membrane. The enzyme catalyses Ca(2+)(in) = Ca(2+)(out). Mechanosensitive cation channel with low conductance and high activation threshold. In contrast to TMEM63B, does not show phospholipid scramblase activity. Acts as a regulator of lysosomal morphology by mediating lysosomal mechanosensitivity. Important for the baby's first breath and respiration throughout life. Upon lung inflation conducts cation currents in alveolar type 1 and 2 cells triggering lamellar body exocytosis and surfactant secretion into airspace. Also acts as an osmosensitive cation channel preferentially activated by hypotonic stress. Functionally, (Microbial infection) Involved in the immunomodulatory effects exerted by H.contortus GAL-1 on host peripheral blood mononuclear cells to down-regulate host immune response. The chain is Mechanosensitive cation channel TMEM63A (TMEM63A) from Capra hircus (Goat).